The primary structure comprises 172 residues: Adenine phosphoribosyltransferase (172 aa).

Belongs to the purine/pyrimidine phosphoribosyltransferase family. In terms of assembly, homodimer.

It is found in the cytoplasm. It catalyses the reaction AMP + diphosphate = 5-phospho-alpha-D-ribose 1-diphosphate + adenine. The protein operates within purine metabolism; AMP biosynthesis via salvage pathway; AMP from adenine: step 1/1. In terms of biological role, catalyzes a salvage reaction resulting in the formation of AMP, that is energically less costly than de novo synthesis. This chain is Adenine phosphoribosyltransferase, found in Malacoplasma penetrans (strain HF-2) (Mycoplasma penetrans).